Consider the following 122-residue polypeptide: FMN-binding protein (122 aa).

Monomer and homodimer. The cofactor is FMN.

The protein resides in the cytoplasm. Functions as a redox protein with a potential of -325 mV. The protein is FMN-binding protein of Nitratidesulfovibrio vulgaris (strain DSM 19637 / Miyazaki F) (Desulfovibrio vulgaris).